Here is a 400-residue protein sequence, read N- to C-terminus: Tryptophan synthase beta chain (400 aa).

Position 91 is an N6-(pyridoxal phosphate)lysine (lysine 91).

The protein belongs to the TrpB family. Tetramer of two alpha and two beta chains. Pyridoxal 5'-phosphate is required as a cofactor.

It catalyses the reaction (1S,2R)-1-C-(indol-3-yl)glycerol 3-phosphate + L-serine = D-glyceraldehyde 3-phosphate + L-tryptophan + H2O. It functions in the pathway amino-acid biosynthesis; L-tryptophan biosynthesis; L-tryptophan from chorismate: step 5/5. Its function is as follows. The beta subunit is responsible for the synthesis of L-tryptophan from indole and L-serine. In Listeria monocytogenes serotype 4a (strain HCC23), this protein is Tryptophan synthase beta chain.